Consider the following 732-residue polypeptide: Elongation factor 2 (732 aa).

A tr-type G domain is found at 19–260 (ERIRNIDIAA…MVIKNLPNPR (242 aa)). GTP contacts are provided by residues 28 to 35 (AHIDHGKT), 94 to 98 (DTPGH), and 148 to 151 (NKVD). Histidine 598 carries the post-translational modification Diphthamide.

The protein belongs to the TRAFAC class translation factor GTPase superfamily. Classic translation factor GTPase family. EF-G/EF-2 subfamily.

Its subcellular location is the cytoplasm. Its function is as follows. Catalyzes the GTP-dependent ribosomal translocation step during translation elongation. During this step, the ribosome changes from the pre-translocational (PRE) to the post-translocational (POST) state as the newly formed A-site-bound peptidyl-tRNA and P-site-bound deacylated tRNA move to the P and E sites, respectively. Catalyzes the coordinated movement of the two tRNA molecules, the mRNA and conformational changes in the ribosome. In Picrophilus torridus (strain ATCC 700027 / DSM 9790 / JCM 10055 / NBRC 100828 / KAW 2/3), this protein is Elongation factor 2.